Reading from the N-terminus, the 335-residue chain is MIEFQRLHKSYSVDGRQIVALHPLDLRIGPGEVFGIIGHSGAGKSTLIRLINRLEEPSGGRLLIGDEDVTALDSQGLRALRRRIGMIFQHFNLLSARTVAGNVAFPLELVGTPRAEIDARVAELLARVGLQEQANQYPAQLSGGQKQRVGIARALATGPQILLCDEATSALDPQTTASVLQLLAQINRELGLTIVLITHEMDVIRRVCDRVAVLDAGKLVETGPVTEVFLHPKHVTTRRFVSEAEHLDEAELHRDFAAVGGRIVRLTFLGNGTYEPVLGRIARDTGVDYNILSGRVDRIKDTPYGQLIVALTGGDQTAARAGFVAAGVQVEDLRV.

In terms of domain architecture, ABC transporter spans 2–241; it reads IEFQRLHKSY…PKHVTTRRFV (240 aa). Residue 38–45 coordinates ATP; sequence GHSGAGKS.

The protein belongs to the ABC transporter superfamily. Methionine importer (TC 3.A.1.24) family. The complex is composed of two ATP-binding proteins (MetN), two transmembrane proteins (MetI) and a solute-binding protein (MetQ).

Its subcellular location is the cell inner membrane. It catalyses the reaction L-methionine(out) + ATP + H2O = L-methionine(in) + ADP + phosphate + H(+). The catalysed reaction is D-methionine(out) + ATP + H2O = D-methionine(in) + ADP + phosphate + H(+). Functionally, part of the ABC transporter complex MetNIQ involved in methionine import. Responsible for energy coupling to the transport system. The polypeptide is Methionine import ATP-binding protein MetN (Xanthomonas oryzae pv. oryzae (strain KACC10331 / KXO85)).